The chain runs to 137 residues: MSEALKILNNIRTLRAQARECTLETLEEMLEKLEVVVNERREEESAAAAEVEERTRKLQQYREMLIADGIDPNELLNSLAAVKSGTKAKRAQRPAKYSYVDENGETKTWTGQGRTPAVIKKAMDEQGKSLDDFLIKQ.

Residues 112–117 (QGRTPA) mediate DNA binding.

Belongs to the histone-like protein H-NS family. In terms of assembly, homodimer that oligomerizes on DNA into higher-order complexes that form bridges between disparate regions of DNA compacting it. Interacts with Hha, Cnu and StpA.

It localises to the cytoplasm. It is found in the nucleoid. In terms of biological role, a DNA-binding protein implicated in transcriptional repression and chromosome organization and compaction. Binds nucleation sites in AT-rich DNA and bridges them, forming higher-order nucleoprotein complexes and condensing the chromosome. As many horizontally transferred genes are AT-rich, it plays a central role in silencing foreign genes. A subset of genes are repressed by H-NS in association with other proteins. The polypeptide is DNA-binding protein H-NS (hns) (Escherichia coli O6:H1 (strain CFT073 / ATCC 700928 / UPEC)).